The sequence spans 799 residues: Leucine--tRNA ligase (799 aa).

The 'HIGH' region signature appears at proline 39 to histidine 50. A 'KMSKS' region motif is present at residues lysine 575–serine 579. ATP is bound at residue lysine 578.

This sequence belongs to the class-I aminoacyl-tRNA synthetase family.

Its subcellular location is the cytoplasm. The enzyme catalyses tRNA(Leu) + L-leucine + ATP = L-leucyl-tRNA(Leu) + AMP + diphosphate. This is Leucine--tRNA ligase from Malacoplasma penetrans (strain HF-2) (Mycoplasma penetrans).